The chain runs to 58 residues: Keratin-associated protein 19-6 (58 aa).

Belongs to the KRTAP type 19 family. As to quaternary structure, interacts with hair keratins.

Its function is as follows. In the hair cortex, hair keratin intermediate filaments are embedded in an interfilamentous matrix, consisting of hair keratin-associated proteins (KRTAP), which are essential for the formation of a rigid and resistant hair shaft through their extensive disulfide bond cross-linking with abundant cysteine residues of hair keratins. The matrix proteins include the high-sulfur and high-glycine-tyrosine keratins. This is Keratin-associated protein 19-6 (KRTAP19-6) from Homo sapiens (Human).